Consider the following 418-residue polypeptide: Glutamyl-tRNA reductase (418 aa).

Residues 49-52 (TCNR), Ser-108, 113-115 (EPQ), and Gln-119 contribute to the substrate site. Catalysis depends on Cys-50, which acts as the Nucleophile. 188–193 (GAGETI) lines the NADP(+) pocket.

This sequence belongs to the glutamyl-tRNA reductase family. Homodimer.

The enzyme catalyses (S)-4-amino-5-oxopentanoate + tRNA(Glu) + NADP(+) = L-glutamyl-tRNA(Glu) + NADPH + H(+). The protein operates within porphyrin-containing compound metabolism; protoporphyrin-IX biosynthesis; 5-aminolevulinate from L-glutamyl-tRNA(Glu): step 1/2. Functionally, catalyzes the NADPH-dependent reduction of glutamyl-tRNA(Glu) to glutamate 1-semialdehyde (GSA). This is Glutamyl-tRNA reductase from Aliivibrio salmonicida (strain LFI1238) (Vibrio salmonicida (strain LFI1238)).